The primary structure comprises 451 residues: Tubulin alpha-2 chain (451 aa).

Positions 12, 73, 142, 146, 147, 181, 208, and 230 each coordinate GTP. D73 is a Mg(2+) binding site. E256 is an active-site residue.

This sequence belongs to the tubulin family. Dimer of alpha and beta chains. A typical microtubule is a hollow water-filled tube with an outer diameter of 25 nm and an inner diameter of 15 nM. Alpha-beta heterodimers associate head-to-tail to form protofilaments running lengthwise along the microtubule wall with the beta-tubulin subunit facing the microtubule plus end conferring a structural polarity. Microtubules usually have 13 protofilaments but different protofilament numbers can be found in some organisms and specialized cells. Mg(2+) serves as cofactor.

The protein localises to the cytoplasm. It is found in the cytoskeleton. The catalysed reaction is GTP + H2O = GDP + phosphate + H(+). In terms of biological role, tubulin is the major constituent of microtubules, a cylinder consisting of laterally associated linear protofilaments composed of alpha- and beta-tubulin heterodimers. Microtubules grow by the addition of GTP-tubulin dimers to the microtubule end, where a stabilizing cap forms. Below the cap, tubulin dimers are in GDP-bound state, owing to GTPase activity of alpha-tubulin. The protein is Tubulin alpha-2 chain (tubB) of Emericella nidulans (strain FGSC A4 / ATCC 38163 / CBS 112.46 / NRRL 194 / M139) (Aspergillus nidulans).